Consider the following 475-residue polypeptide: DNA-binding protein D-ETS-6 (475 aa).

The interval 42–150 is disordered; that stretch reads SIGSGNETKL…VSPVEVPVDP (109 aa). Over residues 70-108 the composition is skewed to low complexity; sequence SSSSTSDSSASSYSSTDSDSGSSTSSSSIRSQLPALNLP. Residues 109 to 121 show a composition bias toward pro residues; sequence VPLPLATPTPPAV. The segment covering 122 to 144 has biased composition (low complexity); sequence SSPHQAPSPRRNSSDSNRSVSPV. The 88-residue stretch at 132–219 folds into the PNT domain; the sequence is RNSSDSNRSV…QHFAISLYHA (88 aa). Positions 255 to 335 form a DNA-binding region, ETS; it reads IQLWQFLLEL…HGKRYAYKFD (81 aa). A disordered region spans residues 350–475; sequence GDPASSMLGS…PVTPTTNAFN (126 aa). A compositionally biased stretch (basic residues) spans 375-388; sequence PPLHHHPQHSHPHH. Residues 401–436 are compositionally biased toward low complexity; sequence SSPASNSSSLGFPSSSTASSQASPGQAPASSSASTS. Residues 453-475 are compositionally biased toward polar residues; it reads RTSTSSAGNYDQGPVTPTTNAFN.

Belongs to the ETS family. Embryonic ventral nervous system and 1 pair of neurons in each thoracic segment.

The protein localises to the nucleus. This chain is DNA-binding protein D-ETS-6 (Ets21C), found in Drosophila melanogaster (Fruit fly).